A 489-amino-acid polypeptide reads, in one-letter code: Metalloreductase STEAP2 (489 aa).

NADP(+) contacts are provided by residues 37-40, 59-60, 92-99, asparagine 117, and alanine 150; these read SGDF, SR, and IHREHYTS. Residues tryptophan 151 and aspartate 159 each coordinate FAD. The helical transmembrane segment at 207-227 threads the bilayer; sequence LFTLWRGPVVVAISLATFFFL. Position 228 (tyrosine 228) interacts with Fe(3+). The chain crosses the membrane as a helical span at residues 258-278; sequence LPIVAITLLSLVYLAGLLAAA. Residues 258–406 enclose the Ferric oxidoreductase domain; the sequence is LPIVAITLLS…LGYVALLITT (149 aa). FAD is bound by residues glutamine 280 and arginine 301. 4 helical membrane-spanning segments follow: residues 304–324, 358–378, 392–412, and 431–451; these read LGLL…CLPM, MYIS…VTSI, FIQS…VLIY, and FVLA…LLLP. Residue histidine 315 participates in heme b binding. Tyrosine 318 contributes to the Fe(3+) binding site. FAD contacts are provided by serine 377 and glutamine 394. Histidine 408 serves as a coordination point for heme b. At serine 482 the chain carries Phosphoserine.

Belongs to the STEAP family. FAD serves as cofactor. It depends on heme b as a cofactor.

It localises to the cell membrane. The protein resides in the endosome membrane. It carries out the reaction 2 Fe(2+) + NADP(+) + H(+) = 2 Fe(3+) + NADPH. It catalyses the reaction 2 Cu(+) + NADP(+) + H(+) = 2 Cu(2+) + NADPH. Integral membrane protein that functions as a NADPH-dependent ferric-chelate reductase, using NADPH from one side of the membrane to reduce a Fe(3+) chelate that is bound on the other side of the membrane. Mediates sequential transmembrane electron transfer from NADPH to FAD and onto heme, and finally to the Fe(3+) chelate. Can also reduce Cu(2+) to Cu(1+). The protein is Metalloreductase STEAP2 (Steap2) of Mus musculus (Mouse).